The following is a 132-amino-acid chain: Small ribosomal subunit protein uS8 (132 aa).

It belongs to the universal ribosomal protein uS8 family. In terms of assembly, part of the 30S ribosomal subunit. Contacts proteins S5 and S12.

In terms of biological role, one of the primary rRNA binding proteins, it binds directly to 16S rRNA central domain where it helps coordinate assembly of the platform of the 30S subunit. The polypeptide is Small ribosomal subunit protein uS8 (Arthrobacter sp. (strain FB24)).